Consider the following 490-residue polypeptide: MTDSIHGGHPNIIRSCGASESMWTASHALGLYLRVSNIATLTIPTWKAKFKKSSASHFIRTAVVQVMLKQPAMRVGIIGENSKQPRFVALSSVDFSQQVEYAEAPSVDSVARSLEKLLLQPWPNLSKRPGWHVRVFHEPSSADKDVCRLRICLTVHHAIFDGESTARFHTSLIDALNNPDPAVARMMDKSPVVNLTGDCRDYPLTQEELINFTADIFWIASELWNILAPSFLKPFTFQTWAGEPYNPDIQAINIRYLSLNPIVTQAVVKRCREEKTTMTNLLNTLCATSLARRVPLTERQGFVNLTAVSLRPWIPENLHPNKTCMSVCASSHAQDFGPDVLAKIRQAEDATIWELAVKLRQDMKRRTDTMPHNEFSYLLRYAGDWRDIFQARYGKPRRELWTLSNLGSIATPASKGPWELESVLFAQFAPVVSCALAVNAASVEGGDMMVSLVWQDGILETDLVEGVRDDLEMWLLGLGNEGNLGISSSM.

It belongs to the alcohol acetyltransferase FCK4 family.

It participates in secondary metabolite biosynthesis. Probable alcohol acetyltransferase; part of the gene cluster that mediates the biosynthesis of cytokinins such as fusatin, fusatinic acids or 8-oxofusatin, known for their growth promoting and anti-senescence activities toward host plants. FCK1 is a bifunctional enzyme that performs the first steps in the biosynthesis of Fusarium cytokinins. It first condenses adenosine monophosphate (AMP) with dimethylallyl diphosphate (DMAPP) to yield isoprenyl adenosine monophosphate. It then catalyzes the removal of the phosphoribose to produce isopentenylaldehyde. The cytochrome P450 monooxygenase then converts isopentenylaldehyde to trans-zeatin. A condensation step converts trans-zeatin to fusatin which is further modified to produce fusatinic acid. The mechanism for oxidation of fusatin to fusatinic acid remains unknown. 8-oxofusatin could be produced through several pathways, via direct oxygenation of fusatin, or via the 8-oxo-pentenyladenine intermediate which itself must arise from either the prenylation of 8-oxo-AMP by FCK1 and/or oxygenation of isopentenylaldehyde. Both the FCK3 and FCK4 enzymes act downstream of the identified cytokinins to produce yet unidentified compounds. The chain is Probable alcohol acetyltransferase FCK4 from Fusarium pseudograminearum (strain CS3096) (Wheat and barley crown-rot fungus).